The primary structure comprises 222 residues: N-acetyltransferase 8F1 (222 aa).

A helical transmembrane segment spans residues 53 to 73 (LVLVSGSWILAVICIFFLLLL). Positions 69–220 (FLLLLLRLLA…CTIQLKYSFP (152 aa)) constitute an N-acetyltransferase domain.

This sequence belongs to the camello family.

The protein localises to the membrane. Its function is as follows. May play a role in regulation of gastrulation. This is N-acetyltransferase 8F1 from Mus musculus (Mouse).